A 309-amino-acid chain; its full sequence is D-alanine--D-alanine ligase (309 aa).

In terms of domain architecture, ATP-grasp spans 104–306; the sequence is KLLWQSFNLP…YQILVQKILE (203 aa). 137–192 is a binding site for ATP; that stretch reads ISLLGLPIIVKPNQEGSSIGITIVYSYETLYKACKTAFIFDNSILIEKFIYGEEYT. The Mg(2+) site is built by Asp-260, Glu-273, and Asn-275.

The protein belongs to the D-alanine--D-alanine ligase family. Mg(2+) is required as a cofactor. Requires Mn(2+) as cofactor.

It localises to the cytoplasm. It catalyses the reaction 2 D-alanine + ATP = D-alanyl-D-alanine + ADP + phosphate + H(+). It participates in cell wall biogenesis; peptidoglycan biosynthesis. Cell wall formation. The sequence is that of D-alanine--D-alanine ligase from Buchnera aphidicola subsp. Baizongia pistaciae (strain Bp).